The primary structure comprises 165 residues: Shikimate kinase (165 aa).

12–17 (GCGKST) lines the ATP pocket. Ser-16 lines the Mg(2+) pocket. 3 residues coordinate substrate: Asp-34, Arg-57, and Gly-79. Arg-116 contributes to the ATP binding site. Substrate is bound at residue Arg-133.

Belongs to the shikimate kinase family. As to quaternary structure, monomer. Mg(2+) is required as a cofactor.

It localises to the cytoplasm. It carries out the reaction shikimate + ATP = 3-phosphoshikimate + ADP + H(+). The protein operates within metabolic intermediate biosynthesis; chorismate biosynthesis; chorismate from D-erythrose 4-phosphate and phosphoenolpyruvate: step 5/7. Its function is as follows. Catalyzes the specific phosphorylation of the 3-hydroxyl group of shikimic acid using ATP as a cosubstrate. The sequence is that of Shikimate kinase from Clostridium botulinum (strain Eklund 17B / Type B).